The following is a 65-amino-acid chain: Large ribosomal subunit protein bL35 (65 aa).

The protein belongs to the bacterial ribosomal protein bL35 family.

This is Large ribosomal subunit protein bL35 from Thiobacillus denitrificans (strain ATCC 25259 / T1).